The sequence spans 311 residues: Mediator of RNA polymerase II transcription subunit 27 (311 aa).

At serine 132 the chain carries Phosphoserine. Position 134 is an N6-methyllysine (lysine 134).

Belongs to the Mediator complex subunit 27 family. As to quaternary structure, component of the Mediator complex, which is composed of MED1, MED4, MED6, MED7, MED8, MED9, MED10, MED11, MED12, MED13, MED13L, MED14, MED15, MED16, MED17, MED18, MED19, MED20, MED21, MED22, MED23, MED24, MED25, MED26, MED27, MED29, MED30, MED31, CCNC, CDK8 and CDC2L6/CDK11. The MED12, MED13, CCNC and CDK8 subunits form a distinct module termed the CDK8 module. Mediator containing the CDK8 module is less active than Mediator lacking this module in supporting transcriptional activation. Individual preparations of the Mediator complex lacking one or more distinct subunits have been variously termed ARC, CRSP, DRIP, PC2, SMCC and TRAP.

The protein resides in the nucleus. Component of the Mediator complex, a coactivator involved in the regulated transcription of nearly all RNA polymerase II-dependent genes. Mediator functions as a bridge to convey information from gene-specific regulatory proteins to the basal RNA polymerase II transcription machinery. Mediator is recruited to promoters by direct interactions with regulatory proteins and serves as a scaffold for the assembly of a functional preinitiation complex with RNA polymerase II and the general transcription factors. The polypeptide is Mediator of RNA polymerase II transcription subunit 27 (MED27) (Sus scrofa (Pig)).